The chain runs to 386 residues: Protein lin-8 (386 aa).

Positions 175-285 (LGLEARRASK…FSQQYGGGGS (111 aa)) are sufficient for interaction with lin-35. Residues 212–240 (EEPYEETGSNWSDPAPEPSQSKSQSPEAK) form a disordered region. Residues 229–240 (PSQSKSQSPEAK) show a composition bias toward low complexity.

This sequence belongs to the lin-8 family. As to quaternary structure, interacts with lin-35 (via C-terminus). As to expression, widely expressed throughout development, with particularly prominent expression in the germline and in neuronal nuclei of the head (at protein level).

It localises to the nucleus. Its function is as follows. Acts as a synthetic multivulva class A (synMuvA) protein and redundantly inhibits lin-3/EGF expression to prevent inappropriate vulva induction. The sequence is that of Protein lin-8 from Caenorhabditis elegans.